We begin with the raw amino-acid sequence, 651 residues long: Crossover junction endonuclease MUS81 (651 aa).

The tract at residues 99 to 124 (RKHEVSDTSNLPDAKPKKQRKQKQYI) is disordered. A compositionally biased stretch (basic residues) spans 115 to 124 (KKQRKQKQYI). Positions 361 to 458 (ILIIDNREIR…QFYYLVEDVV (98 aa)) constitute an ERCC4 domain.

This sequence belongs to the XPF family. In terms of assembly, interacts with EME1. Mg(2+) is required as a cofactor.

The protein resides in the nucleus. In terms of biological role, interacts with EME1 to form a DNA structure-specific endonuclease with substrate preference for branched DNA structures with a 5'-end at the branch nick. Typical substrates include 3'-flap structures, D-loops, replication forks and nicked Holliday junctions. May be required in mitosis for the processing of stalled or collapsed replication fork intermediates. May be required in meiosis for the repair of meiosis-specific double strand breaks subsequent to single-end invasion (SEI). This is Crossover junction endonuclease MUS81 (MUS81) from Debaryomyces hansenii (strain ATCC 36239 / CBS 767 / BCRC 21394 / JCM 1990 / NBRC 0083 / IGC 2968) (Yeast).